Here is a 198-residue protein sequence, read N- to C-terminus: Holliday junction branch migration complex subunit RuvA (198 aa).

Residues 1–63 are domain I; it reads MYDYIKGQLT…EDAQLLFGFH (63 aa). The domain II stretch occupies residues 64 to 142; it reads SEEEKDVFLK…EAPKEESSKP (79 aa). The flexible linker stretch occupies residues 143-147; sequence PKAKQ. The domain III stretch occupies residues 148–198; it reads QGNEQLDEAVEALLALGYKATELKKIRAFFEGTSETAEQYIKSALKMLMKG.

It belongs to the RuvA family. In terms of assembly, homotetramer. Forms an RuvA(8)-RuvB(12)-Holliday junction (HJ) complex. HJ DNA is sandwiched between 2 RuvA tetramers; dsDNA enters through RuvA and exits via RuvB. An RuvB hexamer assembles on each DNA strand where it exits the tetramer. Each RuvB hexamer is contacted by two RuvA subunits (via domain III) on 2 adjacent RuvB subunits; this complex drives branch migration. In the full resolvosome a probable DNA-RuvA(4)-RuvB(12)-RuvC(2) complex forms which resolves the HJ.

The protein resides in the cytoplasm. In terms of biological role, the RuvA-RuvB-RuvC complex processes Holliday junction (HJ) DNA during genetic recombination and DNA repair, while the RuvA-RuvB complex plays an important role in the rescue of blocked DNA replication forks via replication fork reversal (RFR). RuvA specifically binds to HJ cruciform DNA, conferring on it an open structure. The RuvB hexamer acts as an ATP-dependent pump, pulling dsDNA into and through the RuvAB complex. HJ branch migration allows RuvC to scan DNA until it finds its consensus sequence, where it cleaves and resolves the cruciform DNA. The protein is Holliday junction branch migration complex subunit RuvA of Streptococcus equi subsp. equi (strain 4047).